The chain runs to 162 residues: uncharacterized protein (162 aa).

The protein belongs to the LOR family.

This is an uncharacterized protein from Bacillus subtilis (strain 168).